The chain runs to 314 residues: DNA-directed RNA polymerase subunit alpha (314 aa).

The alpha N-terminal domain (alpha-NTD) stretch occupies residues 1-228; it reads MIEIEKPKIE…EHLNIFVGLT (228 aa). Residues 246–314 are alpha C-terminal domain (alpha-CTD); the sequence is EKVLEMTIEE…ELGLGLRKDD (69 aa).

This sequence belongs to the RNA polymerase alpha chain family. In terms of assembly, homodimer. The RNAP catalytic core consists of 2 alpha, 1 beta, 1 beta' and 1 omega subunit. When a sigma factor is associated with the core the holoenzyme is formed, which can initiate transcription.

It carries out the reaction RNA(n) + a ribonucleoside 5'-triphosphate = RNA(n+1) + diphosphate. Its function is as follows. DNA-dependent RNA polymerase catalyzes the transcription of DNA into RNA using the four ribonucleoside triphosphates as substrates. The chain is DNA-directed RNA polymerase subunit alpha from Bacillus pumilus (strain SAFR-032).